We begin with the raw amino-acid sequence, 113 residues long: Eukaryotic translation initiation factor 1b (113 aa).

The residue at position 2 (Ser2) is an N-acetylserine. Residue Ser9 is modified to Phosphoserine.

Belongs to the SUI1 family.

Probably involved in translation. This is Eukaryotic translation initiation factor 1b (EIF1B) from Homo sapiens (Human).